The chain runs to 591 residues: 2-succinyl-5-enolpyruvyl-6-hydroxy-3-cyclohexene-1-carboxylate synthase (591 aa).

This sequence belongs to the TPP enzyme family. MenD subfamily. Homodimer. The cofactor is Mg(2+). Mn(2+) serves as cofactor. It depends on thiamine diphosphate as a cofactor.

It catalyses the reaction isochorismate + 2-oxoglutarate + H(+) = 5-enolpyruvoyl-6-hydroxy-2-succinyl-cyclohex-3-ene-1-carboxylate + CO2. It functions in the pathway quinol/quinone metabolism; 1,4-dihydroxy-2-naphthoate biosynthesis; 1,4-dihydroxy-2-naphthoate from chorismate: step 2/7. Its pathway is quinol/quinone metabolism; menaquinone biosynthesis. Its function is as follows. Catalyzes the thiamine diphosphate-dependent decarboxylation of 2-oxoglutarate and the subsequent addition of the resulting succinic semialdehyde-thiamine pyrophosphate anion to isochorismate to yield 2-succinyl-5-enolpyruvyl-6-hydroxy-3-cyclohexene-1-carboxylate (SEPHCHC). The sequence is that of 2-succinyl-5-enolpyruvyl-6-hydroxy-3-cyclohexene-1-carboxylate synthase from Salinibacter ruber (strain DSM 13855 / M31).